The chain runs to 507 residues: ATP synthase subunit alpha, chloroplastic (507 aa).

170–177 contributes to the ATP binding site; the sequence is GDRQTGKT. Thr-257 carries the post-translational modification Phosphothreonine.

This sequence belongs to the ATPase alpha/beta chains family. As to quaternary structure, F-type ATPases have 2 components, CF(1) - the catalytic core - and CF(0) - the membrane proton channel. CF(1) has five subunits: alpha(3), beta(3), gamma(1), delta(1), epsilon(1). CF(0) has four main subunits: a, b, b' and c.

It localises to the plastid. The protein resides in the chloroplast thylakoid membrane. The enzyme catalyses ATP + H2O + 4 H(+)(in) = ADP + phosphate + 5 H(+)(out). In terms of biological role, produces ATP from ADP in the presence of a proton gradient across the membrane. The alpha chain is a regulatory subunit. The polypeptide is ATP synthase subunit alpha, chloroplastic (Barbarea verna (Land cress)).